The sequence spans 75 residues: Conotoxin Vn5.6 (75 aa).

The signal sequence occupies residues 1–19; sequence MLCLPVFIILLLLASPAAP. Residues 20–59 constitute a propeptide that is removed on maturation; sequence NPLEKRIQSDLIRAALEDADMKTGEREILNIIDSISDVAK. Gln60 carries the post-translational modification Pyrrolidone carboxylic acid.

Belongs to the conotoxin T superfamily. In terms of processing, contains 2 disulfide bonds that can be either 'C1-C3, C2-C4' or 'C1-C4, C2-C3', since these disulfide connectivities have been observed for conotoxins with cysteine framework V (for examples, see AC P0DQQ7 and AC P81755). As to expression, expressed by the venom duct.

Its subcellular location is the secreted. The chain is Conotoxin Vn5.6 from Conus ventricosus (Mediterranean cone).